The primary structure comprises 299 residues: Homoserine O-acetyltransferase (299 aa).

Cysteine 142 serves as the catalytic Acyl-thioester intermediate. Substrate-binding residues include lysine 163 and serine 192. The active-site Proton acceptor is the histidine 235. Residue glutamate 237 is part of the active site. Arginine 249 provides a ligand contact to substrate.

It belongs to the MetA family.

The protein resides in the cytoplasm. It catalyses the reaction L-homoserine + acetyl-CoA = O-acetyl-L-homoserine + CoA. The protein operates within amino-acid biosynthesis; L-methionine biosynthesis via de novo pathway; O-acetyl-L-homoserine from L-homoserine: step 1/1. Transfers an acetyl group from acetyl-CoA to L-homoserine, forming acetyl-L-homoserine. This is Homoserine O-acetyltransferase from Synechococcus sp. (strain ATCC 27144 / PCC 6301 / SAUG 1402/1) (Anacystis nidulans).